The primary structure comprises 111 residues: SPbeta prophage-derived uncharacterized protein YolC (111 aa).

The first 25 residues, 1–25 (MKKRLIGFLVLVPALIMSGITLIEA), serve as a signal peptide directing secretion.

The chain is SPbeta prophage-derived uncharacterized protein YolC (yolC) from Bacillus subtilis (strain 168).